The sequence spans 384 residues: 23S rRNA (uracil(747)-C(5))-methyltransferase RlmC (384 aa).

Residues C3, C11, C14, and C87 each contribute to the [4Fe-4S] cluster site. Residues Q212, F241, E262, and N309 each contribute to the S-adenosyl-L-methionine site. C336 (nucleophile) is an active-site residue.

This sequence belongs to the class I-like SAM-binding methyltransferase superfamily. RNA M5U methyltransferase family. RlmC subfamily.

It catalyses the reaction uridine(747) in 23S rRNA + S-adenosyl-L-methionine = 5-methyluridine(747) in 23S rRNA + S-adenosyl-L-homocysteine + H(+). In terms of biological role, catalyzes the formation of 5-methyl-uridine at position 747 (m5U747) in 23S rRNA. This Shewanella amazonensis (strain ATCC BAA-1098 / SB2B) protein is 23S rRNA (uracil(747)-C(5))-methyltransferase RlmC.